The primary structure comprises 522 residues: Cytochrome P450 monooxygenase FGSG_08207 (522 aa).

The helical transmembrane segment at L10–G30 threads the bilayer. N-linked (GlcNAc...) asparagine glycosylation is found at N104 and N155. C441 contacts heme.

The protein belongs to the cytochrome P450 family. Heme is required as a cofactor.

The protein localises to the membrane. It participates in secondary metabolite biosynthesis. Cytochrome P450 monooxygenase; part of the gene cluster that mediates the biosynthesis of the lipopeptide fusaristatin A. Fusaristatin A consists of a polyketide chain linked to three amino acid residues glutamine (Gln), dehydroalanine (dehydro-Ala), and beta-aminoisobutyric acid. The biosynthesis starts with formation of a linear polyketide chain by the highly reducing polyketide synthase PKS6. The gene cluster does not contain an acyl-CoA ligase or an acyl-transferase, and it is therefore predicted that the polyketide is transferred directly to the nonribosomal peptide synthetase NRPS7. Modules 1-3 from NRPS7 incorporate dehydro-Ala, Gln, and beta-aminoisobutyric acid in the compound, which is released by cyclization. The beta-aminoisobutyric acid units are most likely not freely available to the NRPS, but can be synthesized from thymine, which requires a dehydrogenase, a monooxygenase, and an aminotransferase. The fusaristatin A cluster contains a cytochrome P450 monooxygenase (FGSG_08207) and an aminotransferase (FGSG_17085), which theoretically can perform two of the enzymatic steps. The enzymes may however also be involved in biosynthesis of dehydroalanine or modification of the polyketide. The dehydro-Ala residue can be a result of cyclization, where serine is dehydrated. The last gene of the cluster encodes a protein with an A/B barrel domain found in variable enzymes, which hampers functional prediction. The sequence is that of Cytochrome P450 monooxygenase FGSG_08207 from Gibberella zeae (strain ATCC MYA-4620 / CBS 123657 / FGSC 9075 / NRRL 31084 / PH-1) (Wheat head blight fungus).